The following is a 265-amino-acid chain: Glutamate racemase (265 aa).

Residues 10–11 and 42–43 each bind substrate; these read DS and YG. Cysteine 73 serves as the catalytic Proton donor/acceptor. A substrate-binding site is contributed by 74–75; it reads NT. Cysteine 180 (proton donor/acceptor) is an active-site residue. 181-182 provides a ligand contact to substrate; that stretch reads TH.

This sequence belongs to the aspartate/glutamate racemases family.

The catalysed reaction is L-glutamate = D-glutamate. It functions in the pathway cell wall biogenesis; peptidoglycan biosynthesis. In terms of biological role, provides the (R)-glutamate required for cell wall biosynthesis. The sequence is that of Glutamate racemase from Synechococcus sp. (strain CC9605).